The primary structure comprises 70 residues: Large ribosomal subunit protein uL29 (70 aa).

This sequence belongs to the universal ribosomal protein uL29 family.

The chain is Large ribosomal subunit protein uL29 from Symbiobacterium thermophilum (strain DSM 24528 / JCM 14929 / IAM 14863 / T).